The sequence spans 259 residues: Ribosomal RNA small subunit methyltransferase A (259 aa).

Asn15, Leu17, Gly41, Glu62, Asp86, and Asn105 together coordinate S-adenosyl-L-methionine.

It belongs to the class I-like SAM-binding methyltransferase superfamily. rRNA adenine N(6)-methyltransferase family. RsmA subfamily.

Its subcellular location is the cytoplasm. It carries out the reaction adenosine(1518)/adenosine(1519) in 16S rRNA + 4 S-adenosyl-L-methionine = N(6)-dimethyladenosine(1518)/N(6)-dimethyladenosine(1519) in 16S rRNA + 4 S-adenosyl-L-homocysteine + 4 H(+). Specifically dimethylates two adjacent adenosines (A1518 and A1519) in the loop of a conserved hairpin near the 3'-end of 16S rRNA in the 30S particle. May play a critical role in biogenesis of 30S subunits. The protein is Ribosomal RNA small subunit methyltransferase A of Mycoplasmopsis synoviae (strain 53) (Mycoplasma synoviae).